A 376-amino-acid chain; its full sequence is Palmitoyl-[acyl-carrier-protein] 4-desaturase 2, chloroplastic (376 aa).

Residues 1–33 constitute a chloroplast transit peptide; it reads MELHLALRASPLPAADPGRRPPPPRGNFATNCT. E114, E149, H152, E202, E235, and H238 together coordinate Fe cation.

The protein belongs to the fatty acid desaturase type 2 family. In terms of assembly, homodimer. Fe(2+) serves as cofactor. Preferentially expressed in the flower labellum.

Its subcellular location is the plastid. It localises to the chloroplast stroma. It carries out the reaction hexadecanoyl-[ACP] + 2 reduced [2Fe-2S]-[ferredoxin] + O2 + 2 H(+) = (4Z)-hexadecenoyl-[ACP] + 2 oxidized [2Fe-2S]-[ferredoxin] + 2 H2O. The catalysed reaction is octadecanoyl-[ACP] + 2 reduced [2Fe-2S]-[ferredoxin] + O2 + 2 H(+) = (9Z)-octadecenoyl-[ACP] + 2 oxidized [2Fe-2S]-[ferredoxin] + 2 H2O. The protein operates within lipid metabolism; fatty acid metabolism. Functionally, converts stearoyl-ACP to oleoyl-ACP by introduction of a cis double bond between carbons 9 and 10 of the acyl chain. Converts palmitoyl-ACP to (4Z)-hexadec-4-enoyl-ACP by introduction of a cis double bond between carbons 4 and 5 of the acyl chain. Catalyzes the desaturation of saturated fatty acid 18:0 and 16:0 to generate 18:1 (delta-9) and 16:1 (delta-4) intermediates, expected to give rise to 9-alkenes and 12-alkenes, respectively. The polypeptide is Palmitoyl-[acyl-carrier-protein] 4-desaturase 2, chloroplastic (SAD2) (Ophrys sphegodes (Early spider orchid)).